A 319-amino-acid polypeptide reads, in one-letter code: Non-homologous end joining protein Ku (319 aa).

The Ku domain maps to 10 to 188 (ISFGLVTVPI…PQGIELSEDE (179 aa)). The segment at 252–319 (QSVAKAKASR…TTPKKPRRSA (68 aa)) is disordered. Basic and acidic residues predominate over residues 260–274 (SRGESGEADVHELPR). Basic residues predominate over residues 305–319 (TAAKKTTPKKPRRSA).

Belongs to the prokaryotic Ku family. Homodimer. Interacts with LigD.

With LigD forms a non-homologous end joining (NHEJ) DNA repair enzyme, which repairs dsDNA breaks with reduced fidelity. Binds linear dsDNA with 5'- and 3'- overhangs but not closed circular dsDNA nor ssDNA. Recruits and stimulates the ligase activity of LigD. This Streptomyces avermitilis (strain ATCC 31267 / DSM 46492 / JCM 5070 / NBRC 14893 / NCIMB 12804 / NRRL 8165 / MA-4680) protein is Non-homologous end joining protein Ku.